Reading from the N-terminus, the 122-residue chain is Large ribosomal subunit protein uL14c (122 aa).

Belongs to the universal ribosomal protein uL14 family. As to quaternary structure, part of the 50S ribosomal subunit.

It is found in the plastid. Binds to 23S rRNA. In Euglena longa (Euglenophycean alga), this protein is Large ribosomal subunit protein uL14c.